The sequence spans 60 residues: Protein AC4 (60 aa).

The protein belongs to the geminiviridae protein AC4/C4 family.

In terms of biological role, pathogenicity determinant. May act as a suppressor of RNA-mediated gene silencing, also known as post-transcriptional gene silencing (PTGS), a mechanism of plant viral defense that limits the accumulation of viral RNAs. The chain is Protein AC4 from Pepper huasteco yellow vein virus (PHYVV).